We begin with the raw amino-acid sequence, 466 residues long: Probable multidrug resistance protein NorM (466 aa).

Transmembrane regions (helical) follow at residues 68 to 90, 110 to 132, 142 to 164, 177 to 199, 209 to 231, 251 to 273, 288 to 310, 331 to 353, 368 to 387, 407 to 429, and 433 to 455; these read AHTVYFVSFTFGLGLMAAVSPLV, LWVALLISLPMMASPLYGEHILI, ALAQRYLNGLAWGIAPALGFIAL, PLWITVAAIPVNAALVYVLIHGL, GAGLATTLVNLGTFLAVLAIAAW, LVRQLIALGAPISSSLLLEYGLF, LAAHQIALQVTAVLFMVPLGIGM, AGLVAAVLGVALVSALTVAIILG, SAATVELTATLLLVGATFFI, MTLAFAAIGYWCVAFPVAWVLAF, and LGAVGVWIGFSIGTFVYAGLLVL.

The protein belongs to the multi antimicrobial extrusion (MATE) (TC 2.A.66.1) family.

It localises to the cell inner membrane. In terms of biological role, multidrug efflux pump. This chain is Probable multidrug resistance protein NorM (norM), found in Bradyrhizobium diazoefficiens (strain JCM 10833 / BCRC 13528 / IAM 13628 / NBRC 14792 / USDA 110).